The following is a 203-amino-acid chain: Holliday junction branch migration complex subunit RuvA (203 aa).

The domain I stretch occupies residues 1 to 64 (MIGRLRGIIL…EDAQLLYGFN (64 aa)). Residues 65 to 142 (NKQERTLFKE…KGLHGDLFTP (78 aa)) are domain II. The tract at residues 143–154 (AVDLVLTSPASP) is flexible linker. Residues 155–203 (TSEDAEQEAVAALVALGYKPQEASRMVNKIARPDASSETLIRDALRAAL) are domain III.

This sequence belongs to the RuvA family. In terms of assembly, homotetramer. Forms an RuvA(8)-RuvB(12)-Holliday junction (HJ) complex. HJ DNA is sandwiched between 2 RuvA tetramers; dsDNA enters through RuvA and exits via RuvB. An RuvB hexamer assembles on each DNA strand where it exits the tetramer. Each RuvB hexamer is contacted by two RuvA subunits (via domain III) on 2 adjacent RuvB subunits; this complex drives branch migration. In the full resolvosome a probable DNA-RuvA(4)-RuvB(12)-RuvC(2) complex forms which resolves the HJ.

The protein resides in the cytoplasm. Its function is as follows. The RuvA-RuvB-RuvC complex processes Holliday junction (HJ) DNA during genetic recombination and DNA repair, while the RuvA-RuvB complex plays an important role in the rescue of blocked DNA replication forks via replication fork reversal (RFR). RuvA specifically binds to HJ cruciform DNA, conferring on it an open structure. The RuvB hexamer acts as an ATP-dependent pump, pulling dsDNA into and through the RuvAB complex. HJ branch migration allows RuvC to scan DNA until it finds its consensus sequence, where it cleaves and resolves the cruciform DNA. The sequence is that of Holliday junction branch migration complex subunit RuvA from Salmonella choleraesuis (strain SC-B67).